The chain runs to 245 residues: Purine nucleoside phosphorylase (245 aa).

A purine D-ribonucleoside is bound at residue H7. Phosphate contacts are provided by residues 23–27, R45, and 88–91; these read GDPGR and RAGS. Position 183 to 184 (183 to 184) interacts with a purine D-ribonucleoside; the sequence is ME. The active-site Proton donor is the D206.

It belongs to the PNP/MTAP phosphorylase family. As to quaternary structure, homohexamer; trimer of homodimers.

It carries out the reaction inosine + phosphate = alpha-D-ribose 1-phosphate + hypoxanthine. It catalyses the reaction guanosine + phosphate = alpha-D-ribose 1-phosphate + guanine. The catalysed reaction is 2'-deoxyguanosine + phosphate = 2-deoxy-alpha-D-ribose 1-phosphate + guanine. The enzyme catalyses 2'-deoxyinosine + phosphate = 2-deoxy-alpha-D-ribose 1-phosphate + hypoxanthine. It carries out the reaction S-methyl-5'-thioinosine + phosphate = 5-(methylsulfanyl)-alpha-D-ribose 1-phosphate + hypoxanthine. The protein operates within purine metabolism; purine nucleoside salvage. Inhibited by Immucillin-H and 5'-methylthio-Immucillin-H. Inhibited by 5'-deaza-1'-aza-2c-deoxy-1'-(9-methylene)-Immucilin-G (DADMe-ImmG). Functionally, as part of the purine salvage pathway, catalyzes the phosphorolytic breakdown of the N-glycosidic bond in the beta-(deoxy)ribonucleoside molecules, with the formation of the corresponding free purine bases and pentose-1-phosphate. Preferentially acts on inosine and guanosine, and to a lesser extent on 2'-deoxyguanosine and guanosine. Also catalyzes the phosphorylation of S-methyl-5'-thioinosine (MTI) to hypoxanthine; MTI is produced by adenosine deaminase (ADA)-mediated breakdown of S-methyl-5'-thioadenosine (MTA), a major by-product of polyamine biosynthesis. Generates hypoxanthine from both the purine salvage pathway and from polyamine metabolism which is required for nucleic acids synthesis. Has no activity towards adenosine. The protein is Purine nucleoside phosphorylase of Plasmodium falciparum (isolate 3D7).